Reading from the N-terminus, the 195-residue chain is Probable GTP-binding protein EngB (195 aa).

The 174-residue stretch at 22–195 (QLPEIALAGR…WSALSRYIKR (174 aa)) folds into the EngB-type G domain. GTP contacts are provided by residues 30 to 37 (GRSNVGKS), 57 to 61 (GKTQT), 75 to 78 (DVPG), 142 to 145 (TKLD), and 174 to 176 (FSA). Residues Ser37 and Thr59 each coordinate Mg(2+).

The protein belongs to the TRAFAC class TrmE-Era-EngA-EngB-Septin-like GTPase superfamily. EngB GTPase family. It depends on Mg(2+) as a cofactor.

In terms of biological role, necessary for normal cell division and for the maintenance of normal septation. This Oceanobacillus iheyensis (strain DSM 14371 / CIP 107618 / JCM 11309 / KCTC 3954 / HTE831) protein is Probable GTP-binding protein EngB.